The following is a 494-amino-acid chain: NADPH:adrenodoxin oxidoreductase, mitochondrial (494 aa).

Residues 1-34 (MAPRCWRWWSWSAWPGVRPLPSRSTPTPGFCKKF) constitute a mitochondrion transit peptide. FAD is bound by residues A51, E72, L80, and V116. Residues 187-190 (QGNV), 231-232 (RR), and E243 each bind NADP(+). S313 is modified (phosphoserine). FAD is bound by residues W401 and 408–410 (GVI). G408 is an NADP(+) binding site.

This sequence belongs to the ferredoxin--NADP reductase type 1 family. Monomer. Interacts directly with FDX1. The cofactor is FAD.

The protein localises to the mitochondrion inner membrane. It catalyses the reaction 2 reduced [adrenodoxin] + NADP(+) + H(+) = 2 oxidized [adrenodoxin] + NADPH. It carries out the reaction 2 reduced [2Fe-2S]-[ferredoxin] + NADP(+) + H(+) = 2 oxidized [2Fe-2S]-[ferredoxin] + NADPH. The protein operates within steroid metabolism; cholesterol metabolism. Its function is as follows. Serves as the first electron transfer protein in all the mitochondrial P450 systems including cholesterol side chain cleavage in all steroidogenic tissues, steroid 11-beta hydroxylation in the adrenal cortex, 25-OH-vitamin D3-24 hydroxylation in the kidney, and sterol C-27 hydroxylation in the liver. Also acts as a ferredoxin--NADP(+) reductase essential for coenzyme Q biosynthesis: together with FDX2, transfers the electrons required for the hydroxylation reaction performed by COQ6. The sequence is that of NADPH:adrenodoxin oxidoreductase, mitochondrial (Fdxr) from Rattus norvegicus (Rat).